The following is a 120-amino-acid chain: UPF0102 protein Daro_0503 (120 aa).

A disordered region spans residues 1-20; sequence MQVKANDTTTARGREAEDRA.

This sequence belongs to the UPF0102 family.

The sequence is that of UPF0102 protein Daro_0503 from Dechloromonas aromatica (strain RCB).